Here is a 106-residue protein sequence, read N- to C-terminus: UPF0145 protein Nmul_A0734 (106 aa).

It belongs to the UPF0145 family.

The protein is UPF0145 protein Nmul_A0734 of Nitrosospira multiformis (strain ATCC 25196 / NCIMB 11849 / C 71).